Here is a 255-residue protein sequence, read N- to C-terminus: Acetylglutamate kinase (255 aa).

Substrate is bound by residues 40–41 (GG), Arg62, and Asn153.

This sequence belongs to the acetylglutamate kinase family. ArgB subfamily.

It is found in the cytoplasm. The catalysed reaction is N-acetyl-L-glutamate + ATP = N-acetyl-L-glutamyl 5-phosphate + ADP. It functions in the pathway amino-acid biosynthesis; L-arginine biosynthesis; N(2)-acetyl-L-ornithine from L-glutamate: step 2/4. Its function is as follows. Catalyzes the ATP-dependent phosphorylation of N-acetyl-L-glutamate. The protein is Acetylglutamate kinase of Bacillus thuringiensis (strain Al Hakam).